A 467-amino-acid polypeptide reads, in one-letter code: Asparagine--tRNA ligase (467 aa).

The protein belongs to the class-II aminoacyl-tRNA synthetase family. As to quaternary structure, homodimer.

The protein localises to the cytoplasm. It catalyses the reaction tRNA(Asn) + L-asparagine + ATP = L-asparaginyl-tRNA(Asn) + AMP + diphosphate + H(+). The sequence is that of Asparagine--tRNA ligase from Haemophilus ducreyi (strain 35000HP / ATCC 700724).